The chain runs to 410 residues: Protein ea47 (410 aa).

The sequence is that of Protein ea47 (ea47) from Escherichia coli (Bacteriophage lambda).